The sequence spans 549 residues: Lipase 5 (549 aa).

An N-terminal signal peptide occupies residues 1–15 (MKLALALSLIASVAA). The cysteines at positions 75 and 112 are disulfide-linked. Ser-224 serves as the catalytic Acyl-ester intermediate. Cys-283 and Cys-292 are joined by a disulfide. Residue Asn-329 is glycosylated (N-linked (GlcNAc...) asparagine). Residue Glu-356 is the Charge relay system of the active site. Asn-366 carries N-linked (GlcNAc...) asparagine glycosylation. The active-site Charge relay system is the His-464.

It belongs to the type-B carboxylesterase/lipase family.

It catalyses the reaction a triacylglycerol + H2O = a diacylglycerol + a fatty acid + H(+). This Diutina rugosa (Yeast) protein is Lipase 5 (LIP5).